Here is a 1365-residue protein sequence, read N- to C-terminus: Histone-lysine N-methyltransferase NSD2 (1365 aa).

Residues T110 and T114 each carry the phosphothreonine modification. S121 is subject to Phosphoserine. Positions 149 to 169 (ADVSQSEENEQKSDNKTRRNR) are disordered. S172 carries the post-translational modification Phosphoserine. Residues 222 to 286 (VGDLVWSKVS…FEKSLVAFEG (65 aa)) enclose the PWWP 1 domain. 3 disordered regions span residues 373–455 (MVDS…RKGD), 513–567 (QSEE…DKTA), and 594–658 (CKPL…SKKS). S376 is subject to Phosphoserine. Position 422 is a phosphothreonine (T422). Residues 453 to 521 (KGDSAAQFLV…AQSEEDSGNG (69 aa)) constitute a DNA-binding region (HMG box). Over residues 552-567 (DKHSLRKRETITDKTA) the composition is skewed to basic and acidic residues. The segment covering 603 to 623 (ASATASSALGFNKSSSPSASL) has biased composition (polar residues). Positions 632–648 (PGDEPSESPYESADETQ) are enriched in acidic residues. PHD-type zinc fingers lie at residues 667-713 (EYVC…CASG), 714-770 (IHSC…CHAS), and 831-875 (VSWC…CRAG). A PWWP 2 domain is found at 880 to 942 (FQDIIWVKLG…QARVFPYMEG (63 aa)). An AWS domain is found at 1011-1061 (SEIPKCNCKPTDENPCGSDSECLNRMLMFECHPQVCPAGEYCQNQCFTKRQ). 7 residues coordinate Zn(2+): C1016, C1018, C1026, C1032, C1041, C1046, and C1052. Positions 1063–1180 (PETKIIKTDG…AGTELTFNYN (118 aa)) constitute an SET domain. Residues W1075, 1115-1118 (THFY), and 1141-1142 (NH) contribute to the S-adenosyl-L-methionine site. C1144 is a Zn(2+) binding site. N1186 is a binding site for S-adenosyl-L-methionine. Positions 1187–1203 (EKTVCRCGASNCSGFLG) constitute a Post-SET domain. C1191 lines the Zn(2+) pocket. S-adenosyl-L-methionine is bound at residue R1192. 2 residues coordinate Zn(2+): C1193 and C1198. Residues 1206-1232 (PKTSASLSSEEKGKKAKKKTRRRRAKG) form a disordered region. Over residues 1219 to 1230 (KKAKKKTRRRRA) the composition is skewed to basic residues. A PHD-type 4; atypical zinc finger spans residues 1239–1286 (EDECFRCGDGGQLVLCDRKFCTKAYHLSCLGLGKRPFGKWECPWHHCD). The interval 1329–1365 (RADSSSSTKTEKPFPESLKSKGKRKKRRCWRRVTDGK) is disordered. Positions 1348 to 1359 (SKGKRKKRRCWR) are enriched in basic residues.

It belongs to the class V-like SAM-binding methyltransferase superfamily. Histone-lysine methyltransferase family. SET2 subfamily. In terms of assembly, interacts with HDAC1. Interacts (via PHD-type zinc fingers 1, 2 and 3) with SALL1. Interacts (via PHD-type 1, 2 and 3) with SALL4. Interacts with NANOG. Interacts with OGT. Interacts (via HMG box) with NKX2-5. In terms of tissue distribution, during B-cell development, expressed in early B2 cell progenitors (pre- and pro-B cells) with a decrease in expression at later stages.

It is found in the nucleus. The protein localises to the chromosome. The catalysed reaction is L-lysyl(36)-[histone H3] + S-adenosyl-L-methionine = N(6)-methyl-L-lysyl(36)-[histone H3] + S-adenosyl-L-homocysteine + H(+). It catalyses the reaction L-lysyl(36)-[histone H3] + 2 S-adenosyl-L-methionine = N(6),N(6)-dimethyl-L-lysyl(36)-[histone H3] + 2 S-adenosyl-L-homocysteine + 2 H(+). Its function is as follows. Histone methyltransferase which specifically dimethylates nucleosomal histone H3 at 'Lys-36' (H3K36me2). Also monomethylates nucleosomal histone H3 at 'Lys-36' (H3K36me) in vitro. Does not trimethylate nucleosomal histone H3 at 'Lys-36' (H3K36me3). However, specifically trimethylates histone H3 at 'Lys-36' (H3K36me3) at euchromatic regions in embryonic stem (ES) cells. By methylating histone H3 at 'Lys-36', involved in the regulation of gene transcription during various biological processes. In ES cells, associates with developmental transcription factors such as SALL1 and represses inappropriate gene transcription mediated by histone deacetylation. During heart development, associates with transcription factor NKX2-5 to repress transcription of NKX2-5 target genes. Plays an essential role in adipogenesis, by regulating expression of genes involved in pre-adipocyte differentiation. During T-cell receptor (TCR) and CD28-mediated T-cell activation, promotes the transcription of transcription factor BCL6 which is required for follicular helper T (Tfh) cell differentiation. During B-cell development, required for the generation of the B1 lineage. During B2 cell activation, may contribute to the control of isotype class switch recombination (CRS), splenic germinal center formation, and the humoral immune response. Plays a role in class switch recombination of the immunoglobulin heavy chain (IgH) locus during B-cell activation. By regulating the methylation of histone H3 at 'Lys-36' and histone H4 at 'Lys-20' at the IgH locus, involved in TP53BP1 recruitment to the IgH switch region and promotes the transcription of IgA. Histone methyltransferase which specifically dimethylates nucleosomal histone H3 at 'Lys-36' (H3K36me2). Mono-, di- and tri-methylates histone H3 at 'Lys-27' (H3K27me, H3K27me2, H3K27me3). Methylation of histone H3 at 'Lys-27' is controversial. May act as a transcription regulator that binds DNA and suppresses IL5 transcription through HDAC recruitment. The polypeptide is Histone-lysine N-methyltransferase NSD2 (Nsd2) (Mus musculus (Mouse)).